The chain runs to 246 residues: 3-deoxy-manno-octulosonate cytidylyltransferase (246 aa).

This sequence belongs to the KdsB family.

Its subcellular location is the cytoplasm. It catalyses the reaction 3-deoxy-alpha-D-manno-oct-2-ulosonate + CTP = CMP-3-deoxy-beta-D-manno-octulosonate + diphosphate. It functions in the pathway nucleotide-sugar biosynthesis; CMP-3-deoxy-D-manno-octulosonate biosynthesis; CMP-3-deoxy-D-manno-octulosonate from 3-deoxy-D-manno-octulosonate and CTP: step 1/1. It participates in bacterial outer membrane biogenesis; lipopolysaccharide biosynthesis. Functionally, activates KDO (a required 8-carbon sugar) for incorporation into bacterial lipopolysaccharide in Gram-negative bacteria. The protein is 3-deoxy-manno-octulosonate cytidylyltransferase of Paramagnetospirillum magneticum (strain ATCC 700264 / AMB-1) (Magnetospirillum magneticum).